The sequence spans 933 residues: Serine/threonine-protein kinase PknD (933 aa).

Positions 4–291 constitute a Protein kinase domain; that stretch reads YDIIRMIGKG…ELKDDIEQHL (288 aa). ATP is bound by residues 10-18 and Lys-33; that span reads IGKGGMGEV. Asp-138 acts as the Proton acceptor in catalysis.

It belongs to the protein kinase superfamily. Ser/Thr protein kinase family. Autophosphorylated on serine and threonine residues.

The enzyme catalyses L-seryl-[protein] + ATP = O-phospho-L-seryl-[protein] + ADP + H(+). It carries out the reaction L-threonyl-[protein] + ATP = O-phospho-L-threonyl-[protein] + ADP + H(+). Together with the serine/threonine kinase Pkn1, may play a role in the specific interactions with host proteins during intracellular growth. The sequence is that of Serine/threonine-protein kinase PknD from Chlamydia felis (strain Fe/C-56) (Chlamydophila felis).